The chain runs to 312 residues: Very-long-chain 3-oxoacyl-CoA reductase (312 aa).

The helical transmembrane segment at 4–24 (APPAAGFLYWVGASTIAYLAL) threads the bilayer. Position 50–79 (50–79 (GEWAVVTGGTDGIGKAYAEELAKRGMKIVL)) interacts with NADP(+). A run of 2 helical transmembrane segments spans residues 182 to 202 (GVILNISSASGMLPVPLLTIY) and 269 to 285 (TTGYVIHSLMGSINSIM). Serine 189 serves as a coordination point for substrate. Tyrosine 202 serves as the catalytic Proton acceptor. The Di-lysine motif signature appears at 308 to 312 (KRKKN).

The protein belongs to the short-chain dehydrogenases/reductases (SDR) family. 17-beta-HSD 3 subfamily. As to expression, expressed in most tissues tested.

Its subcellular location is the endoplasmic reticulum membrane. The catalysed reaction is a very-long-chain (3R)-3-hydroxyacyl-CoA + NADP(+) = a very-long-chain 3-oxoacyl-CoA + NADPH + H(+). It carries out the reaction 17beta-estradiol + NAD(+) = estrone + NADH + H(+). It catalyses the reaction 17beta-estradiol + NADP(+) = estrone + NADPH + H(+). The enzyme catalyses 3-oxooctadecanoyl-CoA + NADPH + H(+) = (3R)-hydroxyoctadecanoyl-CoA + NADP(+). The catalysed reaction is (7Z,10Z,13Z,16Z)-3-oxodocosatetraenoyl-CoA + NADPH + H(+) = (3R)-hydroxy-(7Z,10Z,13Z,16Z)-docosatetraenoyl-CoA + NADP(+). It carries out the reaction 3-oxo-(7Z,10Z,13Z,16Z,19Z)-docosapentaenoyl-CoA + NADPH + H(+) = (3R)-hydroxy-(7Z,10Z,13Z,16Z,19Z)-docosapentaenoyl-CoA + NADP(+). It catalyses the reaction (8Z,11Z,14Z)-3-oxoeicosatrienoyl-CoA + NADPH + H(+) = (3R)-hydroxy-(8Z,11Z,14Z)-eicosatrienoyl-CoA + NADP(+). It functions in the pathway lipid metabolism; fatty acid biosynthesis. The protein operates within steroid biosynthesis; estrogen biosynthesis. Its function is as follows. Catalyzes the second of the four reactions of the long-chain fatty acids elongation cycle. This endoplasmic reticulum-bound enzymatic process, allows the addition of two carbons to the chain of long- and very long-chain fatty acids/VLCFAs per cycle. This enzyme has a 3-ketoacyl-CoA reductase activity, reducing 3-ketoacyl-CoA to 3-hydroxyacyl-CoA, within each cycle of fatty acid elongation. Thereby, it may participate in the production of VLCFAs of different chain lengths that are involved in multiple biological processes as precursors of membrane lipids and lipid mediators. May also catalyze the transformation of estrone (E1) into estradiol (E2) and play a role in estrogen formation. The chain is Very-long-chain 3-oxoacyl-CoA reductase from Mus musculus (Mouse).